A 667-amino-acid chain; its full sequence is Mannosyl-oligosaccharide alpha-1,2-mannosidase IA (667 aa).

Residues M1 to K18 are Cytoplasmic-facing. The helical; Signal-anchor for type II membrane protein transmembrane segment at C19–L39 threads the bilayer. Residues P40 to S667 are Lumenal-facing. The segment at G154–T192 is disordered. The span at N156–Q178 shows a compositional bias: low complexity. N278 is a glycosylation site (N-linked (GlcNAc...) asparagine). C483 and C515 are joined by a disulfide. E529 functions as the Proton donor in the catalytic mechanism. T640 is a binding site for Ca(2+).

This sequence belongs to the glycosyl hydrolase 47 family. Ca(2+) serves as cofactor. It depends on Mg(2+) as a cofactor. Complex spatial distribution during embryogenesis, including expression in lobula plate giant neurons. Also expressed in adult wing and eyes.

It is found in the golgi apparatus membrane. The enzyme catalyses N(4)-(alpha-D-Man-(1-&gt;2)-alpha-D-Man-(1-&gt;2)-alpha-D-Man-(1-&gt;3)-[alpha-D-Man-(1-&gt;2)-alpha-D-Man-(1-&gt;3)-[alpha-D-Man-(1-&gt;2)-alpha-D-Man-(1-&gt;6)]-alpha-D-Man-(1-&gt;6)]-beta-D-Man-(1-&gt;4)-beta-D-GlcNAc-(1-&gt;4)-beta-D-GlcNAc)-L-asparaginyl-[protein] (N-glucan mannose isomer 9A1,2,3B1,2,3) + 4 H2O = N(4)-(alpha-D-Man-(1-&gt;3)-[alpha-D-Man-(1-&gt;3)-[alpha-D-Man-(1-&gt;6)]-alpha-D-Man-(1-&gt;6)]-beta-D-Man-(1-&gt;4)-beta-D-GlcNAc-(1-&gt;4)-beta-D-GlcNAc)-L-asparaginyl-[protein] (N-glucan mannose isomer 5A1,2) + 4 beta-D-mannose. It carries out the reaction N(4)-(alpha-D-Man-(1-&gt;2)-alpha-D-Man-(1-&gt;2)-alpha-D-Man-(1-&gt;3)-[alpha-D-Man-(1-&gt;3)-[alpha-D-Man-(1-&gt;2)-alpha-D-Man-(1-&gt;6)]-alpha-D-Man-(1-&gt;6)]-beta-D-Man-(1-&gt;4)-beta-D-GlcNAc-(1-&gt;4)-beta-D-GlcNAc)-L-asparaginyl-[protein] (N-glucan mannose isomer 8A1,2,3B1,3) + 3 H2O = N(4)-(alpha-D-Man-(1-&gt;3)-[alpha-D-Man-(1-&gt;3)-[alpha-D-Man-(1-&gt;6)]-alpha-D-Man-(1-&gt;6)]-beta-D-Man-(1-&gt;4)-beta-D-GlcNAc-(1-&gt;4)-beta-D-GlcNAc)-L-asparaginyl-[protein] (N-glucan mannose isomer 5A1,2) + 3 beta-D-mannose. It functions in the pathway protein modification; protein glycosylation. Functionally, involved in the maturation of Asn-linked oligosaccharides. Progressively trim alpha-1,2-linked mannose residues from Man(9)GlcNAc(2) to produce Man(5)GlcNAc(2). This chain is Mannosyl-oligosaccharide alpha-1,2-mannosidase IA, found in Drosophila melanogaster (Fruit fly).